The sequence spans 936 residues: F-box protein dre-1 (936 aa).

The tract at residues 1–67 (MSSSSSPFFH…GSSEADNPTL (67 aa)) is disordered. A compositionally biased stretch (low complexity) spans 22-36 (QQSPSYSQNSNSPSQ). Residues 48 to 63 (GSTSMRYSPSGSSEAD) show a composition bias toward polar residues. The region spanning 159-205 (QDHINRLPEELLLKVFSFLPDKSLLACSSVSYRFNQISNSHEVWKEL) is the F-box domain. PbH1 repeat units lie at residues 405–427 (SAAP…YITD), 428–450 (NATG…WVKN), 451–473 (HANP…FTFE), 474–496 (HGQG…EVKN), 497–519 (SANP…YVHE), 520–542 (RGRG…WITS), 543–565 (HSDP…YIFG), 566–588 (EGRG…QIRS), 589–611 (QSDP…YVHE), 612–634 (KGRG…WVTT), 635–657 (GSSP…YFYD), 658–680 (QGHG…QIRT), 681–703 (GSNP…LVYN), 704–726 (GGKG…WIKT), 727–749 (DSEP…CIFN), 750–772 (RGKG…LIST), 773–795 (ESNP…EITN), and 796–818 (GATA…CVAT). Residues 843 to 914 (GLCLFKVSSN…LERHCHLQNV (72 aa)) form a UBR-type zinc finger.

As to quaternary structure, component of a SCF ubiquitin ligase complex. Interacts (via F-box) with skr-1. Interacts with blmp-1; the interaction targets blmp-1 for proteasomal degradation. Interacts with ced-9; the interaction inhibits ced-9 activity, either directly or indirectly. In terms of tissue distribution, in mid-embryogenesis, expression is most prominent in epidermal and intestinal cells. By the 1.5-fold stage of embryogenesis, expression is additionally detected in neurons and other cells. During larval and adult stages, highest expression is seen in epidermal seam cells and hypodermis. In larvae, strongly expressed in the P epidermal blast cells and descendents that give rise to the vulva and weakly expressed in the somatic gonad, including the gonadoblasts, the anchor cell and the distal tip cells. Some weak expression also seen in adult spermatheca and uterus. In the musculature, expressed in the pharynx, anal depressor, sex muscles, and body wall muscles. Detected in neurons of the head, tail, ventral cord and periphery. Also expressed in the embryonic tail spike cell.

It is found in the nucleus. Its subcellular location is the cytoplasm. Its pathway is protein modification; protein ubiquitination. Substrate recognition component of a SCF (SKP1-CUL1-F-box protein) E3 ubiquitin-protein ligase complex which mediates the ubiquitination and subsequent proteasomal degradation of target proteins including blmp-1. Promotes ubiquitination of snail family proteins ces-1, scrt-1 and snai-1. Heterochronic protein which is required for the timing of gonad development and epidermal seam cell differentiation. Regulates tail-spike cell death through inhibition of the apoptosis regulator ced-9. The protein is F-box protein dre-1 of Caenorhabditis elegans.